We begin with the raw amino-acid sequence, 350 residues long: Ubiquitin carboxyl-terminal hydrolase 11 (350 aa).

Residues 49–344 (KGLYNVSGND…SACLLFYEME (296 aa)) form the USP domain. Cys59 functions as the Nucleophile in the catalytic mechanism. The active-site Proton acceptor is the His302.

It belongs to the peptidase C19 family.

It catalyses the reaction Thiol-dependent hydrolysis of ester, thioester, amide, peptide and isopeptide bonds formed by the C-terminal Gly of ubiquitin (a 76-residue protein attached to proteins as an intracellular targeting signal).. This is Ubiquitin carboxyl-terminal hydrolase 11 (ubp11) from Schizosaccharomyces pombe (strain 972 / ATCC 24843) (Fission yeast).